The following is a 362-amino-acid chain: Chorismate synthase (362 aa).

Residues arginine 48 and arginine 54 each coordinate NADP(+). Residues 131–133 (RSS), 243–244 (NA), glycine 287, 302–306 (KPTSS), and arginine 328 contribute to the FMN site.

This sequence belongs to the chorismate synthase family. Homotetramer. Requires FMNH2 as cofactor.

The catalysed reaction is 5-O-(1-carboxyvinyl)-3-phosphoshikimate = chorismate + phosphate. Its pathway is metabolic intermediate biosynthesis; chorismate biosynthesis; chorismate from D-erythrose 4-phosphate and phosphoenolpyruvate: step 7/7. In terms of biological role, catalyzes the anti-1,4-elimination of the C-3 phosphate and the C-6 proR hydrogen from 5-enolpyruvylshikimate-3-phosphate (EPSP) to yield chorismate, which is the branch point compound that serves as the starting substrate for the three terminal pathways of aromatic amino acid biosynthesis. This reaction introduces a second double bond into the aromatic ring system. This chain is Chorismate synthase, found in Bradyrhizobium diazoefficiens (strain JCM 10833 / BCRC 13528 / IAM 13628 / NBRC 14792 / USDA 110).